The following is a 142-amino-acid chain: Large-conductance mechanosensitive channel (142 aa).

3 consecutive transmembrane segments (helical) span residues 14 to 34 (VMDL…VDSV), 38 to 58 (LVMP…NYFL), and 82 to 102 (GNFI…FLLI).

The protein belongs to the MscL family. Homopentamer.

It localises to the cell inner membrane. Channel that opens in response to stretch forces in the membrane lipid bilayer. May participate in the regulation of osmotic pressure changes within the cell. This chain is Large-conductance mechanosensitive channel, found in Rhizobium meliloti (strain 1021) (Ensifer meliloti).